The following is a 294-amino-acid chain: NADH-cytochrome b5 reductase 1 (294 aa).

Residues 13–33 form a helical membrane-spanning segment; the sequence is PHASFLGGLVVAAILGLFIFF. The region spanning 44–147 is the FAD-binding FR-type domain; that stretch reads VEWRSFKLVD…KGPKGKFVYT (104 aa). Residues 127-142 and 153-185 each bind FAD; these read SLLTIGQEIKVKGPKG and HLVMIAGGTGITPMYQIIKSSIKTPGDKTRLSL.

This sequence belongs to the flavoprotein pyridine nucleotide cytochrome reductase family. In terms of assembly, monomer. Component of the 2-(3-amino-3-carboxypropyl)histidine synthase complex composed of DPH1, DPH2, DPH3 and a NADH-dependent reductase, predominantly CBR1. The cofactor is FAD.

The protein resides in the mitochondrion outer membrane. It carries out the reaction 2 Fe(III)-[cytochrome b5] + NADH = 2 Fe(II)-[cytochrome b5] + NAD(+) + H(+). The catalysed reaction is 2 Fe(3+)-[Dph3] + NADH = 2 Fe(2+)-[Dph3] + NAD(+) + H(+). Its pathway is protein modification; peptidyl-diphthamide biosynthesis. Its function is as follows. NADH-dependent reductase for DPH3 and cytochrome b5. Required for the first step of diphthamide biosynthesis, a post-translational modification of histidine which occurs in elongation factor 2. DPH1 and DPH2 transfer a 3-amino-3-carboxypropyl (ACP) group from S-adenosyl-L-methionine (SAM) to a histidine residue, the reaction is assisted by a reduction system comprising DPH3 and a NADH-dependent reductase, predominantly CBR1. By reducing DPH3, also involved in the formation of the tRNA wobble base modification mcm5s 2U (5-methoxycarbonylmethyl-2-thiouridine), mediated by the elongator complex. The cytochrome b5/NADH cytochrome b5 reductase electron transfer system supports the catalytic activity of several sterol biosynthetic enzymes. This is NADH-cytochrome b5 reductase 1 (CBR1) from Cryptococcus neoformans var. neoformans serotype D (strain B-3501A) (Filobasidiella neoformans).